Reading from the N-terminus, the 151-residue chain is MITDTCVLHIEEVLELLPHRFPFLLVDRVLNFEKGKFLRAVKNVSFNEPFFQGHFPGKPIFPGVLILEAMAQATGILAFKSTGKLAPGELYYFAAIDAARFKRPVQPGDQMILDVEFIKERRGIARFKGIATVNEEMACEASMMCARRKEI.

Histidine 54 is an active-site residue.

This sequence belongs to the thioester dehydratase family. FabZ subfamily.

Its subcellular location is the cytoplasm. It catalyses the reaction a (3R)-hydroxyacyl-[ACP] = a (2E)-enoyl-[ACP] + H2O. Functionally, involved in unsaturated fatty acids biosynthesis. Catalyzes the dehydration of short chain beta-hydroxyacyl-ACPs and long chain saturated and unsaturated beta-hydroxyacyl-ACPs. The polypeptide is 3-hydroxyacyl-[acyl-carrier-protein] dehydratase FabZ (Blochmanniella pennsylvanica (strain BPEN)).